The primary structure comprises 355 residues: S-adenosylmethionine:tRNA ribosyltransferase-isomerase (355 aa).

It belongs to the QueA family. As to quaternary structure, monomer.

The protein localises to the cytoplasm. It catalyses the reaction 7-aminomethyl-7-carbaguanosine(34) in tRNA + S-adenosyl-L-methionine = epoxyqueuosine(34) in tRNA + adenine + L-methionine + 2 H(+). Its pathway is tRNA modification; tRNA-queuosine biosynthesis. Transfers and isomerizes the ribose moiety from AdoMet to the 7-aminomethyl group of 7-deazaguanine (preQ1-tRNA) to give epoxyqueuosine (oQ-tRNA). This chain is S-adenosylmethionine:tRNA ribosyltransferase-isomerase, found in Photorhabdus laumondii subsp. laumondii (strain DSM 15139 / CIP 105565 / TT01) (Photorhabdus luminescens subsp. laumondii).